Consider the following 528-residue polypeptide: MFSLQDLCRKNTFFLPNDFSKHTLQRLGLYWKEHGSVHRIEKDSIMIQNELVLSINDALQLAGEEGDTDVVQLLLLWEGNLHYAIIGALKTENYNLVCEYHSQIQDWHILLPLIQDPETFEKCHDLSLGCDLICLLQHAVKCDMLSILVKYKEDLLNVRIRHRTQSLFVLACENRRFEIIEWIGQNLSIPEPEAIFSIAIVTKDVELFSLGYKIIFDYMQRQGIFQLTNVVRMLLLNRHIGMAIEKGLLPFILETLKYGGSVKRALSYAVIDNKRKIIDYLVRHENIPRGTIERLLHLAVKKQSSRKTLNLLLSYINYKVKNVKKLLEHVVKYNSTLVIRILLEKKKNLLDATLTRYVKDSTYFQVKEFMQDFSISPEKFIKIAVREKRNVLIKGISEDIWENPAERIRNLKQIVCTIKYESGRQFLINIIHTIYQSYSLKPEEILKLATFYVKHNATTHFKDLCKYLWLNRGTESKKLFLECLEIADEKEFPDIKSIVSEYINYLFTAGAITKEEIMQVYALEYAMY.

ANK repeat units lie at residues 54–83 (SINDALQLAGEEGDTDVVQLLLLWEGNLHY), 129–158 (GCDLICLLQHAVKCDMLSILVKYKEDLLNV), 261–290 (SVKRALSYAVIDNKRKIIDYLVRHENIPRG), 292–321 (IERLLHLAVKKQSSRKTLNLLLSYINYKVK), and 322–352 (NVKKLLEHVVKYNSTLVIRILLEKKKNLLDA).

Belongs to the asfivirus MGF 505 family. In terms of assembly, interacts with host STING1. Interacts with host JAK1; this interaction leads to JAK1 degradation. Interacts with host JAK2; this interaction leads to JAK2 degradation. Interacts with host RELA; this interaction inhibits NF-kappa-B promoter activity.

It localises to the host cytoplasm. Its function is as follows. Plays a role in virus cell tropism, and may be required for efficient virus replication in macrophages. Interferes with host NF-kappa-B promoter activity mediated by TLR8. Mechanistically, inhibits the phosphorylation and subsequent nuclear translocation of host NF-kappa-B RELA subunit downstream of TLR8. Promotes the expression of the autophagy-related protein host ULK1 to degrade host STING and inhibit the interferon response. Inhibits also JAK1- and JAK2-mediated signaling and thus negatively regulates the IFN-gamma signaling. This chain is Protein MGF 505-7R, found in African swine fever virus (strain Badajoz 1971 Vero-adapted) (Ba71V).